Here is a 245-residue protein sequence, read N- to C-terminus: 1-(5-phosphoribosyl)-5-[(5-phosphoribosylamino)methylideneamino] imidazole-4-carboxamide isomerase (245 aa).

The active-site Proton acceptor is the Asp8. Asp129 (proton donor) is an active-site residue.

The protein belongs to the HisA/HisF family.

The protein localises to the cytoplasm. It carries out the reaction 1-(5-phospho-beta-D-ribosyl)-5-[(5-phospho-beta-D-ribosylamino)methylideneamino]imidazole-4-carboxamide = 5-[(5-phospho-1-deoxy-D-ribulos-1-ylimino)methylamino]-1-(5-phospho-beta-D-ribosyl)imidazole-4-carboxamide. Its pathway is amino-acid biosynthesis; L-histidine biosynthesis; L-histidine from 5-phospho-alpha-D-ribose 1-diphosphate: step 4/9. The sequence is that of 1-(5-phosphoribosyl)-5-[(5-phosphoribosylamino)methylideneamino] imidazole-4-carboxamide isomerase from Pelobacter propionicus (strain DSM 2379 / NBRC 103807 / OttBd1).